Reading from the N-terminus, the 81-residue chain is Cytochrome c oxidase subunit 7B2, mitochondrial (81 aa).

A mitochondrion-targeting transit peptide spans M1–Q25. Residues S26–D33 are Mitochondrial matrix-facing. A helical membrane pass occupies residues F34–Q60. Over I61 to Q81 the chain is Mitochondrial intermembrane.

The protein belongs to the cytochrome c oxidase VIIb family. In terms of assembly, component of the cytochrome c oxidase (complex IV, CIV), a multisubunit enzyme composed of 14 subunits. The complex is composed of a catalytic core of 3 subunits MT-CO1, MT-CO2 and MT-CO3, encoded in the mitochondrial DNA, and 11 supernumerary subunits COX4I, COX5A, COX5B, COX6A, COX6B, COX6C, COX7A, COX7B, COX7C, COX8 and NDUFA4, which are encoded in the nuclear genome. The complex exists as a monomer or a dimer and forms supercomplexes (SCs) in the inner mitochondrial membrane with NADH-ubiquinone oxidoreductase (complex I, CI) and ubiquinol-cytochrome c oxidoreductase (cytochrome b-c1 complex, complex III, CIII), resulting in different assemblies (supercomplex SCI(1)III(2)IV(1) and megacomplex MCI(2)III(2)IV(2)).

Its subcellular location is the mitochondrion inner membrane. Its pathway is energy metabolism; oxidative phosphorylation. In terms of biological role, component of the cytochrome c oxidase, the last enzyme in the mitochondrial electron transport chain which drives oxidative phosphorylation. The respiratory chain contains 3 multisubunit complexes succinate dehydrogenase (complex II, CII), ubiquinol-cytochrome c oxidoreductase (cytochrome b-c1 complex, complex III, CIII) and cytochrome c oxidase (complex IV, CIV), that cooperate to transfer electrons derived from NADH and succinate to molecular oxygen, creating an electrochemical gradient over the inner membrane that drives transmembrane transport and the ATP synthase. Cytochrome c oxidase is the component of the respiratory chain that catalyzes the reduction of oxygen to water. Electrons originating from reduced cytochrome c in the intermembrane space (IMS) are transferred via the dinuclear copper A center (CU(A)) of subunit 2 and heme A of subunit 1 to the active site in subunit 1, a binuclear center (BNC) formed by heme A3 and copper B (CU(B)). The BNC reduces molecular oxygen to 2 water molecules using 4 electrons from cytochrome c in the IMS and 4 protons from the mitochondrial matrix. The polypeptide is Cytochrome c oxidase subunit 7B2, mitochondrial (COX7B2) (Macaca fascicularis (Crab-eating macaque)).